Consider the following 44-residue polypeptide: Brevinin-1PLa (44 aa).

Positions 1–18 (NAEEERRDEPDETDVEVE) are excised as a propeptide. Cysteine 38 and cysteine 44 are disulfide-bonded.

Expressed by the skin glands.

Its subcellular location is the secreted. Functionally, antimicrobial peptide. The sequence is that of Brevinin-1PLa from Lithobates palustris (Pickerel frog).